An 89-amino-acid polypeptide reads, in one-letter code: Small ribosomal subunit protein uS15 (89 aa).

The protein belongs to the universal ribosomal protein uS15 family. In terms of assembly, part of the 30S ribosomal subunit. Forms a bridge to the 50S subunit in the 70S ribosome, contacting the 23S rRNA.

In terms of biological role, one of the primary rRNA binding proteins, it binds directly to 16S rRNA where it helps nucleate assembly of the platform of the 30S subunit by binding and bridging several RNA helices of the 16S rRNA. Its function is as follows. Forms an intersubunit bridge (bridge B4) with the 23S rRNA of the 50S subunit in the ribosome. In Chlamydia pneumoniae (Chlamydophila pneumoniae), this protein is Small ribosomal subunit protein uS15.